The primary structure comprises 214 residues: Ribonuclease HII (214 aa).

An RNase H type-2 domain is found at S18–C208. 3 residues coordinate a divalent metal cation: D24, E25, and D116.

This sequence belongs to the RNase HII family. The cofactor is Mn(2+). Requires Mg(2+) as cofactor.

The protein localises to the cytoplasm. The enzyme catalyses Endonucleolytic cleavage to 5'-phosphomonoester.. In terms of biological role, endonuclease that specifically degrades the RNA of RNA-DNA hybrids. In Thermosynechococcus vestitus (strain NIES-2133 / IAM M-273 / BP-1), this protein is Ribonuclease HII.